A 289-amino-acid polypeptide reads, in one-letter code: MNLWVSIFLVSAIAGSCLPSGFAYVDVCNHEFEVFRSVIEQKCPRSLYPSPPIEVDGDLLDKLMDANHGNAYISILFYTSRCPFSRAVRPKFDVLSSMFPHITHLIVEQSQALPSVFSRYGIHSLPSILMVNQTMKMRYHGPKDLASLIQFYKETTGLKPVQYMDEGEPTSLDTDGNLITWLHNGSSIREIAEREPYMVLALMFLSLKLAILIFPIMGSRLKTLWALYVPHLSLGILGETSQLFGRALHMIDVRRLWIKLRLTKTRNFQERAKNALASVSLGKSSSQSA.

Residues 1–23 form the signal peptide; sequence MNLWVSIFLVSAIAGSCLPSGFA. The 121-residue stretch at 37 to 157 folds into the Thioredoxin domain; sequence SVIEQKCPRS…LIQFYKETTG (121 aa). 2 N-linked (GlcNAc...) asparagine glycosylation sites follow: asparagine 132 and asparagine 184. The chain crosses the membrane as a helical span at residues 198–218; sequence MVLALMFLSLKLAILIFPIMG.

Its subcellular location is the membrane. This chain is 5'-adenylylsulfate reductase-like 7 (APRL7), found in Arabidopsis thaliana (Mouse-ear cress).